We begin with the raw amino-acid sequence, 594 residues long: Cytoplasmic polyadenylation element-binding protein 2 (594 aa).

Residues 72-90 (KEREKVDEEKEGVERREEN) are compositionally biased toward basic and acidic residues. Disordered stretches follow at residues 72–91 (KERE…EENG) and 367–388 (GGGF…STSE). Gly residues predominate over residues 367-378 (GGGFNSGSGSGN). The region spanning 458–540 (LVAFIGGVPR…KRVEIKPYFF (83 aa)) is the RRM domain.

Functionally, cytoplasmic polyadenylation element binding protein that binds to and regulates the translation of specific mRNAs. The sequence is that of Cytoplasmic polyadenylation element-binding protein 2 (cpb-2) from Caenorhabditis japonica.